The primary structure comprises 451 residues: Trigger factor (451 aa).

A PPIase FKBP-type domain is found at Gly163 to Pro248.

Belongs to the FKBP-type PPIase family. Tig subfamily.

The protein localises to the cytoplasm. The enzyme catalyses [protein]-peptidylproline (omega=180) = [protein]-peptidylproline (omega=0). In terms of biological role, involved in protein export. Acts as a chaperone by maintaining the newly synthesized protein in an open conformation. Functions as a peptidyl-prolyl cis-trans isomerase. The chain is Trigger factor from Leptospira borgpetersenii serovar Hardjo-bovis (strain JB197).